A 327-amino-acid chain; its full sequence is GTPase Obg (327 aa).

One can recognise an Obg domain in the interval 1 to 159 (MKFLDQVKIY…YVIWLQLKTI (159 aa)). Residues 160-327 (ADVGIVGLPN…IKAKLLSYVS (168 aa)) enclose the OBG-type G domain. GTP contacts are provided by residues 166 to 173 (GLPNAGKS), 191 to 195 (FTTLN), 212 to 215 (DIPG), 279 to 282 (NKTD), and 308 to 310 (STL). 2 residues coordinate Mg(2+): Ser173 and Thr193.

Belongs to the TRAFAC class OBG-HflX-like GTPase superfamily. OBG GTPase family. Monomer. Requires Mg(2+) as cofactor.

Its subcellular location is the cytoplasm. Functionally, an essential GTPase which binds GTP, GDP and possibly (p)ppGpp with moderate affinity, with high nucleotide exchange rates and a fairly low GTP hydrolysis rate. Plays a role in control of the cell cycle, stress response, ribosome biogenesis and in those bacteria that undergo differentiation, in morphogenesis control. In Pelagibacter ubique (strain HTCC1062), this protein is GTPase Obg.